Here is a 295-residue protein sequence, read N- to C-terminus: Putative 23S rRNA (guanine-N(1)-)-methyltransferase (295 aa).

Residues Cys11, Cys14, Cys31, and His35 each coordinate Zn(2+). S-adenosyl-L-methionine contacts are provided by residues Tyr74, 116–117 (TG), and His204.

It belongs to the methyltransferase superfamily. RlmA family.

Confers strong resistance to mycinamicin (MM) and tylosin (TY). May function as methyltransferase. The protein is Putative 23S rRNA (guanine-N(1)-)-methyltransferase (myrA) of Micromonospora griseorubida.